A 251-amino-acid chain; its full sequence is Segregation and condensation protein A (251 aa).

The protein belongs to the ScpA family. As to quaternary structure, component of a cohesin-like complex composed of ScpA, ScpB and the Smc homodimer, in which ScpA and ScpB bind to the head domain of Smc. The presence of the three proteins is required for the association of the complex with DNA.

The protein localises to the cytoplasm. In terms of biological role, participates in chromosomal partition during cell division. May act via the formation of a condensin-like complex containing Smc and ScpB that pull DNA away from mid-cell into both cell halves. The chain is Segregation and condensation protein A from Clostridium botulinum (strain Eklund 17B / Type B).